The primary structure comprises 341 residues: L-amino acid-D/L-Glu epimerase (341 aa).

Substrate is bound by residues T132 and 157–159 (KIK). Mg(2+)-binding residues include D186, E212, and D237. Residues K261 and 315–317 (DLD) each bind substrate.

It belongs to the mandelate racemase/muconate lactonizing enzyme family. Requires Mg(2+) as cofactor.

Its function is as follows. Catalyzes the epimerization of dipeptides with L-Glu in the second position. Has epimerase activity with L-Gly-L-Glu, L-Ala-L-Glu, L-Ser-L-Glu, L-Pro-L-Glu, L-Val-L-Glu, L-Met-L-Glu, L-Thr-L-Glu and L-Phe-L-Glu (in vitro). This Sulfurimonas denitrificans (strain ATCC 33889 / DSM 1251) (Thiomicrospira denitrificans (strain ATCC 33889 / DSM 1251)) protein is L-amino acid-D/L-Glu epimerase.